The primary structure comprises 295 residues: Small ribosomal subunit biogenesis GTPase RsgA (295 aa).

One can recognise a CP-type G domain in the interval 68–228 (KNLLTKPHVA…VVDTPGFANL (161 aa)). GTP is bound by residues 117-120 (NKMD) and 170-178 (GLSGVGKSS). Zn(2+) is bound by residues cysteine 250, cysteine 255, histidine 257, and cysteine 263.

Belongs to the TRAFAC class YlqF/YawG GTPase family. RsgA subfamily. As to quaternary structure, monomer. Associates with 30S ribosomal subunit, binds 16S rRNA. Zn(2+) is required as a cofactor.

The protein localises to the cytoplasm. Its function is as follows. One of several proteins that assist in the late maturation steps of the functional core of the 30S ribosomal subunit. Helps release RbfA from mature subunits. May play a role in the assembly of ribosomal proteins into the subunit. Circularly permuted GTPase that catalyzes slow GTP hydrolysis, GTPase activity is stimulated by the 30S ribosomal subunit. The chain is Small ribosomal subunit biogenesis GTPase RsgA from Thermotoga maritima (strain ATCC 43589 / DSM 3109 / JCM 10099 / NBRC 100826 / MSB8).